A 499-amino-acid chain; its full sequence is Cryptochrome-1 (499 aa).

FAD is bound by residues arginine 190, serine 218, serine 220, glutamine 261, histidine 328, 360–362 (DAD), cysteine 366, and asparagine 369.

The protein belongs to the DNA photolyase class-1 family. Interacts with tim and per; promoted by light conditions. FAD is required as a cofactor.

The protein localises to the cytoplasm. The protein resides in the perinuclear region. It is found in the nucleus. Functionally, blue light-dependent regulator that is the input of the circadian feedback loop. Has no photolyase activity for cyclobutane pyrimidine dimers or 6-4 photoproducts. Regulation of expression by light suggests a role in photoreception for locomotor activity rhythms. Functions, together with per, as a transcriptional repressor required for the oscillation of peripheral circadian clocks and for the correct specification of clock cells. Genes directly activated by the transcription factors Clock (Clk) and cycle (cyc) are repressed by cry. The polypeptide is Cryptochrome-1 (Culex quinquefasciatus (Southern house mosquito)).